Reading from the N-terminus, the 409-residue chain is Probable ferredoxin reductase CtmF (409 aa).

Ala-15, Asp-37, Lys-50, Val-83, Asp-279, and Val-298 together coordinate FAD.

The protein belongs to the FAD-dependent oxidoreductase family. It depends on FAD as a cofactor.

It participates in terpene metabolism; monoterpene degradation. In terms of biological role, involved in the degradation of the cyclic monoterpene limonene. Probably part of an electron transfer system involved in the oxidation of limonene to perillyl alcohol. This chain is Probable ferredoxin reductase CtmF, found in Castellaniella defragrans (strain DSM 12143 / CCUG 39792 / 65Phen) (Alcaligenes defragrans).